The chain runs to 256 residues: 1-(5-phosphoribosyl)-5-[(5-phosphoribosylamino)methylideneamino] imidazole-4-carboxamide isomerase (256 aa).

D8 functions as the Proton acceptor in the catalytic mechanism. Catalysis depends on D130, which acts as the Proton donor.

The protein belongs to the HisA/HisF family.

It is found in the cytoplasm. It catalyses the reaction 1-(5-phospho-beta-D-ribosyl)-5-[(5-phospho-beta-D-ribosylamino)methylideneamino]imidazole-4-carboxamide = 5-[(5-phospho-1-deoxy-D-ribulos-1-ylimino)methylamino]-1-(5-phospho-beta-D-ribosyl)imidazole-4-carboxamide. The protein operates within amino-acid biosynthesis; L-histidine biosynthesis; L-histidine from 5-phospho-alpha-D-ribose 1-diphosphate: step 4/9. The protein is 1-(5-phosphoribosyl)-5-[(5-phosphoribosylamino)methylideneamino] imidazole-4-carboxamide isomerase of Chlorobium phaeovibrioides (strain DSM 265 / 1930) (Prosthecochloris vibrioformis (strain DSM 265)).